A 74-amino-acid polypeptide reads, in one-letter code: Ferredoxin-like protein in nif region (74 aa).

The region spanning 2–30 (PFKIIASQCTSCSACEPLCPNVAISEKGG) is the 4Fe-4S ferredoxin-type domain. [4Fe-4S] cluster is bound by residues Cys-10, Cys-13, Cys-16, Cys-20, Cys-39, Cys-51, and Cys-55.

The cofactor is [4Fe-4S] cluster.

The polypeptide is Ferredoxin-like protein in nif region (frxA) (Bradyrhizobium diazoefficiens (strain JCM 10833 / BCRC 13528 / IAM 13628 / NBRC 14792 / USDA 110)).